Reading from the N-terminus, the 671-residue chain is Zinc finger protein 568 (671 aa).

The tract at residues 1–31 (MERLSQMAGRRAWCAEDSVPRQEEEDRTRPS) is disordered. Over residues 18–29 (SVPRQEEEDRTR) the composition is skewed to basic and acidic residues. KRAB domains are found at residues 34–105 (VTFK…RRSP) and 124–195 (LRFE…IWHP). The interval 214–366 (EKMAKKHTCP…QGSERPHKCK (153 aa)) is disordered. Composition is skewed to basic and acidic residues over residues 226 to 251 (EDSKTRGDREVTRELEGQQVHQEGHL), 296 to 312 (IEREQLHSKAKASEHAQ), and 329 to 341 (RPQESRKDSERKK). 11 C2H2-type zinc fingers span residues 363–385 (HKCKECGKAFHTPSQLSHHQKLH), 391–413 (YKCQECGKAFPSNAQLSLHHRVH), 419–441 (FECKECGKAFMRPSHLLRHQRIH), 447–469 (HKCKECGKAFRYDTQLSLHLLTH), 475–497 (FECKDCDKVYSCASQLALHQMSH), 503–525 (HKCKECGKGFISDSHLLRHQSVH), 531–553 (YKCKECGKGFRRGSELARHQRAH), 559–581 (YKCKECGKSFTCTTELFRHQKVH), 587–609 (HKCKECGKAFIRRSELTHHERSH), 615–637 (YECKECGKTFGRGSELSRHQKIH), and 643–665 (YKCQQCGKAFIRGSHLTQHQRIH).

Belongs to the krueppel C2H2-type zinc-finger protein family. As to quaternary structure, interacts with TRIM28. Little or no expression detected in most adult tissues (brain, liver, kidney, spleen, testis, ovary). In the hippocampus, detected in neural stem cells within the subventricular zone and subgranular zone.

The protein localises to the nucleus. Its function is as follows. Has transcriptional repression activity, partially through the recruitment of the corepressor TRIM28 but also has repression activity independently of this interaction. Essential during embryonic development, where it acts as direct repressor of IGF2-P0, placental-specific transcript of IGF2, in early development and regulates convergent extension movements required for axis elongation and tissue morphogenesis in all germ layers. Also important for normal morphogenesis of extraembryonic tissues including the yolk sac, extraembryonic mesoderm and placenta. May enhance proliferation or maintenance of neural stem cells. The protein is Zinc finger protein 568 of Mus musculus (Mouse).